A 427-amino-acid polypeptide reads, in one-letter code: Enolase (427 aa).

Gln-163 contributes to the (2R)-2-phosphoglycerate binding site. Residue Glu-205 is the Proton donor of the active site. The Mg(2+) site is built by Asp-242, Glu-285, and Asp-312. (2R)-2-phosphoglycerate is bound by residues Lys-337, Arg-366, Ser-367, and Lys-388. Catalysis depends on Lys-337, which acts as the Proton acceptor.

Belongs to the enolase family. Mg(2+) serves as cofactor.

The protein resides in the cytoplasm. It is found in the secreted. Its subcellular location is the cell surface. It carries out the reaction (2R)-2-phosphoglycerate = phosphoenolpyruvate + H2O. It participates in carbohydrate degradation; glycolysis; pyruvate from D-glyceraldehyde 3-phosphate: step 4/5. Functionally, catalyzes the reversible conversion of 2-phosphoglycerate (2-PG) into phosphoenolpyruvate (PEP). It is essential for the degradation of carbohydrates via glycolysis. The polypeptide is Enolase (Beijerinckia indica subsp. indica (strain ATCC 9039 / DSM 1715 / NCIMB 8712)).